Reading from the N-terminus, the 276-residue chain is Dermonecrotic toxin LspiSicTox-betaIE4ii (276 aa).

His-5 is an active-site residue. Residues Glu-25 and Asp-27 each contribute to the Mg(2+) site. His-41 acts as the Nucleophile in catalysis. 2 disulfide bridges follow: Cys-45/Cys-51 and Cys-47/Cys-189. Asp-85 contributes to the Mg(2+) binding site.

Belongs to the arthropod phospholipase D family. Class II subfamily. It depends on Mg(2+) as a cofactor. In terms of tissue distribution, expressed by the venom gland.

The protein resides in the secreted. It catalyses the reaction an N-(acyl)-sphingosylphosphocholine = an N-(acyl)-sphingosyl-1,3-cyclic phosphate + choline. The enzyme catalyses an N-(acyl)-sphingosylphosphoethanolamine = an N-(acyl)-sphingosyl-1,3-cyclic phosphate + ethanolamine. The catalysed reaction is a 1-acyl-sn-glycero-3-phosphocholine = a 1-acyl-sn-glycero-2,3-cyclic phosphate + choline. It carries out the reaction a 1-acyl-sn-glycero-3-phosphoethanolamine = a 1-acyl-sn-glycero-2,3-cyclic phosphate + ethanolamine. Dermonecrotic toxins cleave the phosphodiester linkage between the phosphate and headgroup of certain phospholipids (sphingolipid and lysolipid substrates), forming an alcohol (often choline) and a cyclic phosphate. This toxin acts on sphingomyelin (SM). It may also act on ceramide phosphoethanolamine (CPE), lysophosphatidylcholine (LPC) and lysophosphatidylethanolamine (LPE), but not on lysophosphatidylserine (LPS), and lysophosphatidylglycerol (LPG). It acts by transphosphatidylation, releasing exclusively cyclic phosphate products as second products. Induces dermonecrosis, hemolysis, increased vascular permeability, edema, inflammatory response, and platelet aggregation. This chain is Dermonecrotic toxin LspiSicTox-betaIE4ii, found in Loxosceles spinulosa (Recluse spider).